A 94-amino-acid chain; its full sequence is 2S albumin-like cysteine protease inhibitor (94 aa).

Intrachain disulfides connect cysteine 12–cysteine 35, cysteine 36–cysteine 82, and cysteine 48–cysteine 89.

It belongs to the 2S seed storage albumins family. As to expression, expressed in seeds (at protein level).

In terms of biological role, cysteine protease inhibitor that likely functions in defense against insects by inhibiting cysteine proteases in the midgut of herbivore insects such as C.maculatus. Selectively inhibits cathepsin L, as well as papain, ficin and bromelain with lower efficiency. Shows antitumor activity, inhibiting the growth of prostate cancer cell lines PC3 and DU145, and the gastric cancer cell line Hs746T. No activity against cathepsin B or serine proteases (trypsin, human plasma kallikrein and elastase). This Araucaria angustifolia (Brazilian pine tree) protein is 2S albumin-like cysteine protease inhibitor.